We begin with the raw amino-acid sequence, 824 residues long: Dapper 1 (824 aa).

5 disordered regions span residues 1-34, 61-80, 131-150, 454-487, and 516-536; these read MKPI…QRTR, ALTP…GDTP, EEHL…LSDG, TSNV…ESTQ, and ASSS…SSSQ. The interaction with tcf7l1 stretch occupies residues 2–343; it reads KPIPATPDHL…PVRTNKPRTS (342 aa). The segment covering 11-34 has biased composition (basic and acidic residues); sequence LGQHQESPRRKDKGEAESERQRTR. The stretch at 19–47 forms a coiled coil; it reads RRKDKGEAESERQRTRERLEATLAGLAEL. The segment covering 520 to 530 has biased composition (basic and acidic residues); sequence FDERPPLDFKS. Positions 821 to 824 match the PDZ-binding motif; it reads MTTV.

The protein belongs to the dapper family. As to quaternary structure, interacts with dbf4, dvl2 and tcf7l1.

Its subcellular location is the cytoplasm. It is found in the nucleus. In terms of biological role, involved in regulation of intracellular signaling pathways during development. Specifically thought to play a role in canonical and/or non-canonical Wnt signaling pathways through interaction with DSH (Dishevelled) family proteins. Binds to dvl2 and regulates the degradation of ctnnb1/beta-catenin, thereby modulating the transcriptional activation of target genes of the Wnt signaling pathway. May also bind to and directly stimulate the activity of tcf7l1. The protein is Dapper 1 (dact1) of Xenopus tropicalis (Western clawed frog).